We begin with the raw amino-acid sequence, 99 residues long: Large ribosomal subunit protein bL21 (99 aa).

Belongs to the bacterial ribosomal protein bL21 family. As to quaternary structure, part of the 50S ribosomal subunit. Contacts protein L20.

In terms of biological role, this protein binds to 23S rRNA in the presence of protein L20. The polypeptide is Large ribosomal subunit protein bL21 (Neorickettsia sennetsu (strain ATCC VR-367 / Miyayama) (Ehrlichia sennetsu)).